The primary structure comprises 59 residues: Large ribosomal subunit protein bL33 (59 aa).

The protein belongs to the bacterial ribosomal protein bL33 family.

The sequence is that of Large ribosomal subunit protein bL33 from Neorickettsia sennetsu (strain ATCC VR-367 / Miyayama) (Ehrlichia sennetsu).